Consider the following 95-residue polypeptide: Aspartyl/glutamyl-tRNA(Asn/Gln) amidotransferase subunit C (95 aa).

The protein belongs to the GatC family. As to quaternary structure, heterotrimer of A, B and C subunits.

It catalyses the reaction L-glutamyl-tRNA(Gln) + L-glutamine + ATP + H2O = L-glutaminyl-tRNA(Gln) + L-glutamate + ADP + phosphate + H(+). The catalysed reaction is L-aspartyl-tRNA(Asn) + L-glutamine + ATP + H2O = L-asparaginyl-tRNA(Asn) + L-glutamate + ADP + phosphate + 2 H(+). In terms of biological role, allows the formation of correctly charged Asn-tRNA(Asn) or Gln-tRNA(Gln) through the transamidation of misacylated Asp-tRNA(Asn) or Glu-tRNA(Gln) in organisms which lack either or both of asparaginyl-tRNA or glutaminyl-tRNA synthetases. The reaction takes place in the presence of glutamine and ATP through an activated phospho-Asp-tRNA(Asn) or phospho-Glu-tRNA(Gln). The chain is Aspartyl/glutamyl-tRNA(Asn/Gln) amidotransferase subunit C from Nitratidesulfovibrio vulgaris (strain DSM 19637 / Miyazaki F) (Desulfovibrio vulgaris).